The sequence spans 428 residues: 3-phosphoshikimate 1-carboxyvinyltransferase (428 aa).

Residues Lys-21, Ser-22, and Arg-26 each contribute to the 3-phosphoshikimate site. Lys-21 provides a ligand contact to phosphoenolpyruvate. Residues Gly-92 and Arg-120 each contribute to the phosphoenolpyruvate site. 3-phosphoshikimate-binding residues include Ser-165, Gln-167, Asp-313, and Lys-340. Residue Gln-167 coordinates phosphoenolpyruvate. Asp-313 (proton acceptor) is an active-site residue. Residues Arg-344 and Arg-386 each coordinate phosphoenolpyruvate.

This sequence belongs to the EPSP synthase family. In terms of assembly, monomer.

The protein resides in the cytoplasm. The catalysed reaction is 3-phosphoshikimate + phosphoenolpyruvate = 5-O-(1-carboxyvinyl)-3-phosphoshikimate + phosphate. The protein operates within metabolic intermediate biosynthesis; chorismate biosynthesis; chorismate from D-erythrose 4-phosphate and phosphoenolpyruvate: step 6/7. Its function is as follows. Catalyzes the transfer of the enolpyruvyl moiety of phosphoenolpyruvate (PEP) to the 5-hydroxyl of shikimate-3-phosphate (S3P) to produce enolpyruvyl shikimate-3-phosphate and inorganic phosphate. The chain is 3-phosphoshikimate 1-carboxyvinyltransferase from Carboxydothermus hydrogenoformans (strain ATCC BAA-161 / DSM 6008 / Z-2901).